The primary structure comprises 457 residues: MALWGGRFTQAADQRFKQFNDSLRFDYRLAEQDIVGSVAWSKALVTVGVLTADEQLQLEEALSALLEEVRVNPQQILESDAEDIHSWVEGKLIDKVGQLGKKLHTGRSRNDQVATDLKLWCKDTVTELLSANRQLQSALVETAQNNQDAVMPGYTHLQRAQPVTFAHWCLAYVEMLARDESRLQDALKRLDVSPLGCGALAGTAYEIDREQLAGWLGFASATRNSLDSVSDRDHVLELLSDASIGMVHLSRFAEDLIFFNTGEAGFVELSDRVTSGSSLMPQKKNPDALELIRGKCGRVQGALTAMMMTLKGLPLAYNKDMQEDKEGLFDALDTWLDCLHMAALVLDGIQVKRPRCQEAAQQGYANATELADYLVAKGVPFREAHHIVGETVVEAIRQGKPLEDLSLADLQKFSAVIGDDVYPILSLQSCLDKRAAKGGVSPQQVAQAIDYAKARLA.

It belongs to the lyase 1 family. Argininosuccinate lyase subfamily.

Its subcellular location is the cytoplasm. The enzyme catalyses 2-(N(omega)-L-arginino)succinate = fumarate + L-arginine. It functions in the pathway amino-acid biosynthesis; L-arginine biosynthesis; L-arginine from L-ornithine and carbamoyl phosphate: step 3/3. The sequence is that of Argininosuccinate lyase from Citrobacter koseri (strain ATCC BAA-895 / CDC 4225-83 / SGSC4696).